Reading from the N-terminus, the 197-residue chain is Carnitine operon protein CaiE (197 aa).

Residues 177–197 are disordered; it reads TAPEANRPRLRGTTEVKPKGQ. A compositionally biased stretch (basic and acidic residues) spans 188–197; the sequence is GTTEVKPKGQ.

This sequence belongs to the transferase hexapeptide repeat family.

The protein operates within amine and polyamine metabolism; carnitine metabolism. Overproduction of CaiE stimulates the activity of CaiB and CaiD. This chain is Carnitine operon protein CaiE, found in Proteus sp. (strain LE138).